The following is a 178-amino-acid chain: uncharacterized protein (178 aa).

Positions 1–13 (MEVASSSSACQFD) are enriched in polar residues. Disordered stretches follow at residues 1–24 (MEVA…ELKP) and 47–114 (WPSR…KKEK).

This is an uncharacterized protein from Caenorhabditis elegans.